A 548-amino-acid chain; its full sequence is ComP-specific O-oligosaccharyltransferase (548 aa).

12 helical membrane passes run 8 to 28 (IKNY…IIPN), 32 to 52 (LSST…LLTV), 68 to 88 (WFLF…IYFF), 91 to 111 (FFFS…GFNE), 119 to 139 (IVKK…LIAI), 164 to 184 (LGQP…LCYL), 189 to 209 (SLNN…NVMT), 213 to 233 (SAWI…QKKI), 239 to 259 (IFFN…FNLI), 331 to 351 (MLWN…CFLI), 363 to 383 (LFLF…YPFA), and 418 to 438 (TLFL…VLDI).

This sequence belongs to the PglL O-oligosaccharyltransferase family.

Its subcellular location is the cell membrane. Its function is as follows. Specifically catalyzes the glycosylation of the pilin-like competence factor ComP. This is ComP-specific O-oligosaccharyltransferase from Acinetobacter baylyi (strain ATCC 33305 / BD413 / ADP1).